The sequence spans 91 residues: MSELDPTESLIEYPSDFPIKVMGLAHDQFVPTIIDVVVVHDPEFHEGRIEQRPSSAGNYLSLTVTVRATSREQLDNLYRALSSHPMVKYVL.

Belongs to the UPF0250 family.

The sequence is that of UPF0250 protein mma_3250 from Janthinobacterium sp. (strain Marseille) (Minibacterium massiliensis).